A 132-amino-acid chain; its full sequence is Phosphoribosyl-AMP cyclohydrolase (132 aa).

Mg(2+) is bound at residue Asp76. Cys77 provides a ligand contact to Zn(2+). Mg(2+) contacts are provided by Asp78 and Asp80. Zn(2+) is bound by residues Cys93 and Cys100.

This sequence belongs to the PRA-CH family. Homodimer. Requires Mg(2+) as cofactor. Zn(2+) serves as cofactor.

It is found in the cytoplasm. The catalysed reaction is 1-(5-phospho-beta-D-ribosyl)-5'-AMP + H2O = 1-(5-phospho-beta-D-ribosyl)-5-[(5-phospho-beta-D-ribosylamino)methylideneamino]imidazole-4-carboxamide. It participates in amino-acid biosynthesis; L-histidine biosynthesis; L-histidine from 5-phospho-alpha-D-ribose 1-diphosphate: step 3/9. Its function is as follows. Catalyzes the hydrolysis of the adenine ring of phosphoribosyl-AMP. In Methanobrevibacter smithii (strain ATCC 35061 / DSM 861 / OCM 144 / PS), this protein is Phosphoribosyl-AMP cyclohydrolase.